Reading from the N-terminus, the 110-residue chain is Large ribosomal subunit protein uL22 (110 aa).

It belongs to the universal ribosomal protein uL22 family. In terms of assembly, part of the 50S ribosomal subunit.

This protein binds specifically to 23S rRNA; its binding is stimulated by other ribosomal proteins, e.g. L4, L17, and L20. It is important during the early stages of 50S assembly. It makes multiple contacts with different domains of the 23S rRNA in the assembled 50S subunit and ribosome. In terms of biological role, the globular domain of the protein is located near the polypeptide exit tunnel on the outside of the subunit, while an extended beta-hairpin is found that lines the wall of the exit tunnel in the center of the 70S ribosome. In Maridesulfovibrio salexigens (strain ATCC 14822 / DSM 2638 / NCIMB 8403 / VKM B-1763) (Desulfovibrio salexigens), this protein is Large ribosomal subunit protein uL22.